The primary structure comprises 87 residues: MANTAQAKKRVRQTATRRERNFGLRSKLRTAIKGVRKAVAAGDKNVAEVVFRKAVSVIDSVASKGIIHKNKASRHKSRLSGAVKAMG.

Belongs to the bacterial ribosomal protein bS20 family.

Functionally, binds directly to 16S ribosomal RNA. The polypeptide is Small ribosomal subunit protein bS20 (Nitrosomonas europaea (strain ATCC 19718 / CIP 103999 / KCTC 2705 / NBRC 14298)).